We begin with the raw amino-acid sequence, 408 residues long: Multidrug resistance protein MdtG (408 aa).

A run of 11 helical transmembrane segments spans residues 16–36 (LIVA…VMPF), 58–78 (IVFS…GGLA), 92–112 (LGMG…QFLI), 115–135 (ALLG…ATQV), 146–166 (TLST…GLLA), 173–193 (PVFF…LFCI), 224–244 (LFVT…ILTL), 256–276 (VAFI…LSAP), 290–310 (ILIT…YVQT), 319–339 (FLLG…LVYN), and 378–398 (AVFL…WNSL).

The protein belongs to the major facilitator superfamily. DHA1 family. MdtG (TC 2.A.1.2.20) subfamily.

It localises to the cell inner membrane. Confers resistance to fosfomycin and deoxycholate. This chain is Multidrug resistance protein MdtG, found in Escherichia coli O127:H6 (strain E2348/69 / EPEC).